Consider the following 1381-residue polypeptide: Non-structural polyprotein 1AB (1381 aa).

Residues 121–160 (VLVQEHKKLDSDLKESRRELSQLKLEHSLLRHDYERLVRE) are a coiled coil. Transmembrane regions (helical) follow at residues 169–189 (FKFS…MSAV), 249–269 (LALG…LVGT), 279–299 (LYML…VALA), 324–344 (AFAI…CLAM), and 365–385 (FSHL…AILI). Residues His477, Asp506, and Ser569 each act as charge relay system; for serine protease activity in the active site. Residue Tyr694 is modified to O-(5'-phospho-RNA)-tyrosine. A coiled-coil region spans residues 703–732 (TRDQLREMAEAAREADDDFDDYEEEKNEVD). A disordered region spans residues 856-879 (MQRKKQKPKKREEGPERGPINPDE). The region spanning 1122-1254 (SVFIEFDWTR…TFDHVPPDYV (133 aa)) is the RdRp catalytic domain.

It belongs to the astroviridae polyprotein 1AB family. In terms of assembly, monomer. Cleaved by the viral and host proteases. The protease is probably autocatalytically cleaved.

It localises to the host membrane. The catalysed reaction is RNA(n) + a ribonucleoside 5'-triphosphate = RNA(n+1) + diphosphate. Its function is as follows. Responsible for the cleavage of the polyprotein into functional products. In terms of biological role, protein covalently attached to the 5' extremity of the genomic and subgenomic RNAs. It may serve as a primer for the replicase. This chain is Non-structural polyprotein 1AB (ORF1), found in Neovison vison (American mink).